A 512-amino-acid chain; its full sequence is Maturase K (512 aa).

Belongs to the intron maturase 2 family. MatK subfamily.

It is found in the plastid. Its subcellular location is the chloroplast. In terms of biological role, usually encoded in the trnK tRNA gene intron. Probably assists in splicing its own and other chloroplast group II introns. The protein is Maturase K of Oenothera argillicola (Appalachian evening primrose).